The sequence spans 643 residues: uncharacterized protein (643 aa).

Positions 561–643 (LNQELETSSE…GADRKKRGVY (83 aa)) are disordered. The span at 591–606 (SRGGRGGRGARGGNRG) shows a compositional bias: gly residues. Residues 617 to 635 (GHDRQMKEKHKSDIKQRGA) are compositionally biased toward basic and acidic residues.

This is an uncharacterized protein from Caenorhabditis elegans.